We begin with the raw amino-acid sequence, 600 residues long: Aspartate--tRNA(Asp/Asn) ligase (600 aa).

L-aspartate is bound at residue glutamate 181. Residues 205–208 (QQFK) form an aspartate region. Arginine 227 contributes to the L-aspartate binding site. ATP contacts are provided by residues 227–229 (RDE) and glutamine 236. An L-aspartate-binding site is contributed by histidine 455. ATP is bound at residue glutamate 489. Residue arginine 496 participates in L-aspartate binding. 541 to 544 (GIDR) lines the ATP pocket.

The protein belongs to the class-II aminoacyl-tRNA synthetase family. Type 1 subfamily. In terms of assembly, homodimer.

Its subcellular location is the cytoplasm. It carries out the reaction tRNA(Asx) + L-aspartate + ATP = L-aspartyl-tRNA(Asx) + AMP + diphosphate. Its function is as follows. Aspartyl-tRNA synthetase with relaxed tRNA specificity since it is able to aspartylate not only its cognate tRNA(Asp) but also tRNA(Asn). Reaction proceeds in two steps: L-aspartate is first activated by ATP to form Asp-AMP and then transferred to the acceptor end of tRNA(Asp/Asn). This is Aspartate--tRNA(Asp/Asn) ligase from Rubrobacter xylanophilus (strain DSM 9941 / JCM 11954 / NBRC 16129 / PRD-1).